Consider the following 71-residue polypeptide: uncharacterized protein (71 aa).

A signal peptide spans 1-26; the sequence is MIKFSVILGMIRCSLTHITTKNTVNA.

This is an uncharacterized protein from Bacillus subtilis (strain 168).